The chain runs to 185 residues: uncharacterized protein (185 aa).

The region spanning 39–177 (LWHASAGVLV…SWPFVPDSRA (139 aa)) is the Nudix hydrolase domain. The Nudix box signature appears at 77–99 (GGVVDPGETPQETAIREVGEELG). Mg(2+) is bound by residues Glu-93 and Glu-97.

The protein belongs to the Nudix hydrolase family. The cofactor is Mg(2+).

This is an uncharacterized protein from Rhodococcus erythropolis (Arthrobacter picolinophilus).